The chain runs to 560 residues: DNA ligase B (560 aa).

Lysine 124 (N6-AMP-lysine intermediate) is an active-site residue.

This sequence belongs to the NAD-dependent DNA ligase family. LigB subfamily.

It catalyses the reaction NAD(+) + (deoxyribonucleotide)n-3'-hydroxyl + 5'-phospho-(deoxyribonucleotide)m = (deoxyribonucleotide)n+m + AMP + beta-nicotinamide D-nucleotide.. Catalyzes the formation of phosphodiester linkages between 5'-phosphoryl and 3'-hydroxyl groups in double-stranded DNA using NAD as a coenzyme and as the energy source for the reaction. This chain is DNA ligase B, found in Shigella sonnei (strain Ss046).